The sequence spans 197 residues: uncharacterized protein (197 aa).

4 helical membrane-spanning segments follow: residues 30–50 (WVAMGATAITVLAGAHIVEMA), 61–81 (LVAGASVVFWAFGPWLIPPLV), 101–121 (LWSVVFPLGMYGVGAYRLGLA), and 130–150 (IGEFEGWVALAVWTITFVAML).

It is found in the cell membrane. This is an uncharacterized protein from Mycobacterium tuberculosis (strain CDC 1551 / Oshkosh).